Consider the following 109-residue polypeptide: Nucleoid-associated protein Asuc_0997 (109 aa).

Positions M1 to K23 are disordered.

It belongs to the YbaB/EbfC family. As to quaternary structure, homodimer.

It localises to the cytoplasm. It is found in the nucleoid. Its function is as follows. Binds to DNA and alters its conformation. May be involved in regulation of gene expression, nucleoid organization and DNA protection. The protein is Nucleoid-associated protein Asuc_0997 of Actinobacillus succinogenes (strain ATCC 55618 / DSM 22257 / CCUG 43843 / 130Z).